A 1092-amino-acid polypeptide reads, in one-letter code: Elongation factor 3 (1092 aa).

Val-92 is an ADP binding site. 7 HEAT repeats span residues 95–133 (MVKTKILHGIATGLHNTKQPVAREGAITAIETLIKSPVS), 138–175 (PYMITFIPVLLERLSDKAKTVCLAADSALKALITRLTP), 177–214 (ATKQVLPLLLAGIEYSQKWQTKVGALELMQSLSKTAPR), 218–255 (TAVPDLVPPLSEVMHDTKAEAKNAGRQTMEAICELINN), 257–293 (DIEKFIPALIDTIANPEKVPDTVHLLGATTFVSEVLP), 294–331 (PTLAIMVPLLSRGLNERQTAIKRKAAVIIINMCKLVEK), and 333–370 (QIIAPFLPRLLPTLEKIQDDVADPECRQVCQNATKILT). Glu-454 provides a ligand contact to ADP. ABC transporter domains follow at residues 486-704 (EELC…YYEL) and 730-1044 (LKVQ…DKNK). Asn-766, Glu-973, Asn-976, and His-1002 together coordinate ADP. Disordered regions lie at residues 1023 to 1044 (TPTGHNWVSGQGSGPRLEDKNK) and 1063 to 1092 (SKLSGKDLRKKRKEREARRKRGEEVSDDDE). Basic residues predominate over residues 1063–1075 (SKLSGKDLRKKRK). Residues 1076–1086 (EREARRKRGEE) show a composition bias toward basic and acidic residues.

Belongs to the ABC transporter superfamily. ABCF family. EF3 subfamily.

It localises to the cytoplasm. The protein resides in the cytosol. It carries out the reaction ATP + H2O = ADP + phosphate + H(+). Its pathway is protein biosynthesis; polypeptide chain elongation. Functionally, ribosome-dependent ATPase that functions in cytoplasmic translation elongation. Required for the ATP-dependent release of deacylated tRNA from the ribosomal E-site during protein biosynthesis. Stimulates the eEF1A-dependent binding of aminoacyl-tRNA to the ribosomal A-site, which has reduced affinity for tRNA as long as the E-site is occupied. Assists translation termination by stimulating the release of nascent protein from the ribosome by release factors. The sequence is that of Elongation factor 3 from Gonapodya prolifera (strain JEL478) (Monoblepharis prolifera).